A 333-amino-acid polypeptide reads, in one-letter code: MRKIKVAPFMPTEVEVNEISANRAEIVAYPFESGYAVTLAHPLRRLILGSSIGYAPISVKIEGAAHEFDNIRGMHEDVAVFIINLKNIRFKIKDGSDRVELKYSFSGYKEVTAQDLNNDQIEVVNGDLPLATLNEDAELNFTMVIAKGIGYVPSEDLRDEVAPDSIALDAFFTPVRKANYKIEPVLVEDNPNFEKITFDIETDAQIGPVEAFTNALEVMNKQLSVFNGVLDVDISTTLPKRTNDDNELKPFLAAVDALGLSARSFNSLDRAGIKFLGELVLMSENEIKNIKNLGKKSLDETNECLVEHGFGPEFELKENTRANLVKKLEQLKA.

Residues 1-227 (MRKIKVAPFM…VMNKQLSVFN (227 aa)) are alpha N-terminal domain (alpha-NTD). An alpha C-terminal domain (alpha-CTD) region spans residues 247–333 (ELKPFLAAVD…LVKKLEQLKA (87 aa)).

The protein belongs to the RNA polymerase alpha chain family. As to quaternary structure, homodimer. The RNAP catalytic core consists of 2 alpha, 1 beta, 1 beta' and 1 omega subunit. When a sigma factor is associated with the core the holoenzyme is formed, which can initiate transcription.

It catalyses the reaction RNA(n) + a ribonucleoside 5'-triphosphate = RNA(n+1) + diphosphate. In terms of biological role, DNA-dependent RNA polymerase catalyzes the transcription of DNA into RNA using the four ribonucleoside triphosphates as substrates. This Sulfurovum sp. (strain NBC37-1) protein is DNA-directed RNA polymerase subunit alpha.